A 464-amino-acid chain; its full sequence is Glutamate--tRNA ligase (464 aa).

A 'HIGH' region motif is present at residues 9 to 19 (PSPTGYLHIGG). A 'KMSKS' region motif is present at residues 242-246 (KISKR). Lysine 245 contacts ATP.

Belongs to the class-I aminoacyl-tRNA synthetase family. Glutamate--tRNA ligase type 1 subfamily. Monomer.

The protein resides in the cytoplasm. It catalyses the reaction tRNA(Glu) + L-glutamate + ATP = L-glutamyl-tRNA(Glu) + AMP + diphosphate. Catalyzes the attachment of glutamate to tRNA(Glu) in a two-step reaction: glutamate is first activated by ATP to form Glu-AMP and then transferred to the acceptor end of tRNA(Glu). This Neisseria gonorrhoeae (strain ATCC 700825 / FA 1090) protein is Glutamate--tRNA ligase.